A 56-amino-acid chain; its full sequence is Protein hunchback (56 aa).

3 C2H2-type zinc fingers span residues histidine 1–histidine 5, histidine 11–histidine 33, and tyrosine 39–leucine 56.

The protein belongs to the hunchback C2H2-type zinc-finger protein family.

The protein localises to the nucleus. In terms of biological role, gap class segmentation protein that controls development of head structures. The polypeptide is Protein hunchback (hb) (Bithynia tentaculata (Spire snail)).